The chain runs to 739 residues: MSDACIYCKTAQRCPSDMIQAGPVALIRKLRWLYAPDPVMAGYALRTTCTSLLALGIALWMELGSPQWAALTVWMVAQGTRGRSLAKAKWHLFGMVVGVISGITLVAAIPQAPLMFILLLAVGIGTFCMIGTFMPGPASMTNYRIHGMRASGFTYAIVSLDGIADPHHIFAISMSRATYILLGIVLEASISGLFQLGLTKRTRHQLASTFEDTLKPALTAIAGILVGKEGAMQNVQAIFAQITTLGDQVEFAEVELGRHDHAGDHARAALADIAVLLARALDLATLMRLPLSQDDMFRQEAEAIRDMFLKLPARLEETESMASILADLLTLRRQCRQKVVSDFSTAQPDDAAREAVLRHGMLQQALVELIDALRMALTQFEASRHPGSHDHFHSPIRSYRDWQQAITNSLRSSVTVFGAGLIWICTAWPSGLTFIMFVCIVCSLFSTLERPALATQAFLRGACCAVVAAGILNLALMGKSTTFEMLGMWSGLAMMIGGLAFAYPPLTLPAVSYNLFLPILIGPSNQAKTDEIVYFNTALPLVLGLLYASWMYRVFLPYDPAHQRWTMREHILRDLHRIADGRAQETVDSVVSRNVDRFVRLMTNSGSTPSPVIQAYLTGILSGMRVMLNLLRLQAIRRDTRLNPEAGQALALIMGRMSHFSGRYHGHYGRTLRATKLAILRLRTCERNEDRPRERFVLIAALTSLDVIATELDTNRIFFDARSPYLDPSLTPAELESTG.

Helical transmembrane passes span 53–73, 90–110, 114–134, 178–198, 421–441, 457–477, 491–511, and 532–552; these read LALG…ALTV, WHLF…AAIP, LMFI…GTFM, TYIL…QLGL, LIWI…VCIV, AFLR…LALM, GLAM…LPAV, and IVYF…SWMY.

The protein belongs to the aromatic acid exporter ArAE (TC 2.A.85) family.

The protein resides in the cell membrane. This is an uncharacterized protein from Gluconobacter oxydans (strain 621H) (Gluconobacter suboxydans).